We begin with the raw amino-acid sequence, 404 residues long: Imidazolonepropionase (404 aa).

Positions 70 and 72 each coordinate Fe(3+). Residues histidine 70 and histidine 72 each contribute to the Zn(2+) site. 4-imidazolone-5-propanoate contacts are provided by arginine 79, tyrosine 142, and histidine 174. Position 142 (tyrosine 142) interacts with N-formimidoyl-L-glutamate. Histidine 234 provides a ligand contact to Fe(3+). Histidine 234 is a Zn(2+) binding site. Residue glutamate 237 participates in 4-imidazolone-5-propanoate binding. Aspartate 308 provides a ligand contact to Fe(3+). A Zn(2+)-binding site is contributed by aspartate 308.

It belongs to the metallo-dependent hydrolases superfamily. HutI family. The cofactor is Zn(2+). Fe(3+) serves as cofactor.

It localises to the cytoplasm. The catalysed reaction is 4-imidazolone-5-propanoate + H2O = N-formimidoyl-L-glutamate. Its pathway is amino-acid degradation; L-histidine degradation into L-glutamate; N-formimidoyl-L-glutamate from L-histidine: step 3/3. Functionally, catalyzes the hydrolytic cleavage of the carbon-nitrogen bond in imidazolone-5-propanoate to yield N-formimidoyl-L-glutamate. It is the third step in the universal histidine degradation pathway. This Thermoplasma volcanium (strain ATCC 51530 / DSM 4299 / JCM 9571 / NBRC 15438 / GSS1) protein is Imidazolonepropionase.